The sequence spans 63 residues: Putative transmembrane protein ORF63 (63 aa).

The Extracellular segment spans residues 1–8; the sequence is MQSGNFTL. Residues 9–29 traverse the membrane as a helical segment; it reads EVIMYLINSILAFIMIFFTFV. The Cytoplasmic segment spans residues 30–31; the sequence is NP. The helical transmembrane segment at 32 to 52 threads the bilayer; the sequence is SLLKCQYWTYILVALITAIIF. At 53 to 63 the chain is on the extracellular side; the sequence is HTGSKVGKSSG.

It is found in the host membrane. The polypeptide is Putative transmembrane protein ORF63 (Acidianus filamentous virus 1 (isolate United States/Yellowstone) (AFV-1)).